The chain runs to 182 residues: Large ribosomal subunit protein uL5c (182 aa).

The protein belongs to the universal ribosomal protein uL5 family. In terms of assembly, part of the 50S ribosomal subunit; contacts the 5S rRNA.

The protein localises to the plastid. Its subcellular location is the chloroplast. In terms of biological role, binds 5S rRNA, forms part of the central protuberance of the 50S subunit. This is Large ribosomal subunit protein uL5c (rpl5) from Cyanidium caldarium (Red alga).